The chain runs to 279 residues: MQKYLEKANVLIEALPYIRKFNSKIILIKYGGSAMENEELKHCVMQDIALLKLVGLKPIIVHGGGKDISAMCEKLGVKSEFKNGLRVSDKATTEVASMVLNHINKNLVHSLQNLGVKAIGLCGKDGALLECVKKDENLAFVGTIQKVNSKILEELLEKDFLPIITPIGMDENFNTYNINADDAACSIAKALRAEKLAFLTDTAGLYEDFNDKNSLISKISLEQAKILAPKIEGGMHVKLKSCIDACENGVKKVHILDGRVKHSLLLEFFTDEGIGTLVG.

Substrate is bound by residues 64–65 (GG), Arg86, and Asn177.

It belongs to the acetylglutamate kinase family. ArgB subfamily.

It localises to the cytoplasm. It catalyses the reaction N-acetyl-L-glutamate + ATP = N-acetyl-L-glutamyl 5-phosphate + ADP. It participates in amino-acid biosynthesis; L-arginine biosynthesis; N(2)-acetyl-L-ornithine from L-glutamate: step 2/4. Its function is as follows. Catalyzes the ATP-dependent phosphorylation of N-acetyl-L-glutamate. In Campylobacter jejuni subsp. jejuni serotype O:6 (strain 81116 / NCTC 11828), this protein is Acetylglutamate kinase.